The chain runs to 109 residues: Putative pterin-4-alpha-carbinolamine dehydratase (109 aa).

The protein belongs to the pterin-4-alpha-carbinolamine dehydratase family.

It carries out the reaction (4aS,6R)-4a-hydroxy-L-erythro-5,6,7,8-tetrahydrobiopterin = (6R)-L-erythro-6,7-dihydrobiopterin + H2O. The sequence is that of Putative pterin-4-alpha-carbinolamine dehydratase from Halorhodospira halophila (strain DSM 244 / SL1) (Ectothiorhodospira halophila (strain DSM 244 / SL1)).